Here is a 632-residue protein sequence, read N- to C-terminus: Putative ferric transport system permease protein FbpB 1 (632 aa).

The next 15 helical transmembrane spans lie at 5–25 (SFNLTWAWFLPVIVYGALPLL), 37–57 (LFLTALSVLFMFISATVYKIS), 58–78 (MGYSVIVLLVGYTALATLSLA), 93–113 (LLCIILLIFFFIVYPTLAIFV), 144–164 (LFLSGFVGIVSTVFGLAFALY), 178–198 (IFSILPIVTPPFVVGLGVTLM), 223–243 (GFNGIAIAQILAFAPISFMIL), 270–290 (YQIIFPLLRPALANSFLIVFI), 299–319 (PLVLGGSFDVIATQIYFYIAG), 330–350 (LGSMLLIFSLAIFIIQYIWIG), 377–397 (IIGMLGFWVIFNMALYGSIFY), 436–456 (IYAGIAAPLTAFFGLLIAYIV), 469–489 (FLTMLCFAVPGTVAGVSYILA), 490–510 (FNNAPLYITGTGIIVIISMVM), and 547–567 (CFIVLPLLKPALLSALVTSFV). One can recognise an ABC transmembrane type-1 1 domain in the interval 140–345 (ITNSLFLSGF…IFSLAIFIIQ (206 aa)). The ABC transmembrane type-1 2 domain occupies 431–632 (LINTLIYAGI…DCRRYAYFPF (202 aa)).

This sequence belongs to the binding-protein-dependent transport system permease family. FbpB subfamily. As to quaternary structure, the complex is composed of two ATP-binding proteins (FbpC), two transmembrane proteins (FbpB) and a solute-binding protein (FbpA).

The protein localises to the cell inner membrane. In terms of biological role, part of the ABC transporter complex FbpABC (TC 3.A.1.10.1) involved in Fe(3+) ions import. Probably responsible for the translocation of the substrate across the membrane. The chain is Putative ferric transport system permease protein FbpB 1 (fbpB1) from Haemophilus influenzae (strain ATCC 51907 / DSM 11121 / KW20 / Rd).